The following is a 158-amino-acid chain: Transcription elongation factor GreA (158 aa).

The protein belongs to the GreA/GreB family.

In terms of biological role, necessary for efficient RNA polymerase transcription elongation past template-encoded arresting sites. The arresting sites in DNA have the property of trapping a certain fraction of elongating RNA polymerases that pass through, resulting in locked ternary complexes. Cleavage of the nascent transcript by cleavage factors such as GreA or GreB allows the resumption of elongation from the new 3'terminus. GreA releases sequences of 2 to 3 nucleotides. This Polaromonas naphthalenivorans (strain CJ2) protein is Transcription elongation factor GreA.